A 953-amino-acid chain; its full sequence is Zinc finger protein 507 (953 aa).

Ser95 is modified (phosphoserine). 3 consecutive C2H2-type zinc fingers follow at residues 125–147 (YQCSLCKFLSSSFSVLKDHIKQH), 155–185 (LMCSECHITSRSQEELEAHVVNDHDNDANIH), and 248–270 (YRCLFCSYTCGQQRMLKTHAWKH). Ser427 carries the post-translational modification Phosphoserine. Residues 470–489 (KGLATDENAPPGRRRTNSES) form a disordered region. 5 C2H2-type zinc fingers span residues 641–663 (YRCRLCHYTSGNKGYIKQHLRVH), 669–691 (YQCPICEHIADNSKDLESHMIHH), 697–720 (YQCKQCEESFHYKSQLRNHEREQH), 758–780 (YRCDVCDYTSTTYVGVRNHRRIH), and 786–808 (YRCSLCGYVCSHPPSLKSHMWKH). A disordered region spans residues 831 to 891 (GRVLGKTPGK…KLSPTSNTSY (61 aa)). The span at 854 to 891 (TGSSENAVSSSELMSQTPSEVLGTNENEKLSPTSNTSY) shows a compositional bias: polar residues. Residues 911–933 (FCCCICGFESTSKENLLDHMKEH) form a C2H2-type 9 zinc finger.

Belongs to the krueppel C2H2-type zinc-finger protein family.

It localises to the nucleus. Its function is as follows. May be involved in transcriptional regulation. The chain is Zinc finger protein 507 (ZNF507) from Pongo abelii (Sumatran orangutan).